Here is a 520-residue protein sequence, read N- to C-terminus: J protein JJJ2 (520 aa).

The 65-residue stretch at 7–71 (TYYSVLGLPT…SSKQEYDAIL (65 aa)) folds into the J domain. 2 disordered regions span residues 82-257 (LGYK…DLQN) and 389-409 (FESS…RGRP). A compositionally biased stretch (low complexity) spans 91–100 (QNQSNNLNQQ). Residues 152–182 (TSKNSKEQQGSQETTNTSENLQRNAKGNKNN) show a composition bias toward polar residues. The segment covering 397 to 409 (ENHRSDFNLRGRP) has biased composition (basic and acidic residues).

Its subcellular location is the cytoplasm. The protein localises to the nucleus. The chain is J protein JJJ2 (JJJ2) from Vanderwaltozyma polyspora (strain ATCC 22028 / DSM 70294 / BCRC 21397 / CBS 2163 / NBRC 10782 / NRRL Y-8283 / UCD 57-17) (Kluyveromyces polysporus).